A 325-amino-acid polypeptide reads, in one-letter code: DNA-directed RNA polymerase subunit alpha (325 aa).

An alpha N-terminal domain (alpha-NTD) region spans residues 1–231 (MQTSLLKPKI…DQLSVFAALE (231 aa)). Positions 246-325 (IDPILLRPVD…ENWPPAGLDK (80 aa)) are alpha C-terminal domain (alpha-CTD).

Belongs to the RNA polymerase alpha chain family. Homodimer. The RNAP catalytic core consists of 2 alpha, 1 beta, 1 beta' and 1 omega subunit. When a sigma factor is associated with the core the holoenzyme is formed, which can initiate transcription.

The catalysed reaction is RNA(n) + a ribonucleoside 5'-triphosphate = RNA(n+1) + diphosphate. Functionally, DNA-dependent RNA polymerase catalyzes the transcription of DNA into RNA using the four ribonucleoside triphosphates as substrates. This chain is DNA-directed RNA polymerase subunit alpha, found in Paraburkholderia phytofirmans (strain DSM 17436 / LMG 22146 / PsJN) (Burkholderia phytofirmans).